The following is a 299-amino-acid chain: Recombination-associated protein RdgC (299 aa).

The protein belongs to the RdgC family.

The protein localises to the cytoplasm. It is found in the nucleoid. In terms of biological role, may be involved in recombination. In Neisseria meningitidis serogroup C (strain 053442), this protein is Recombination-associated protein RdgC.